A 282-amino-acid chain; its full sequence is Bifunctional protein FolD (282 aa).

NADP(+) contacts are provided by residues 165–167 (GAS) and Ile-231.

The protein belongs to the tetrahydrofolate dehydrogenase/cyclohydrolase family. Homodimer.

The catalysed reaction is (6R)-5,10-methylene-5,6,7,8-tetrahydrofolate + NADP(+) = (6R)-5,10-methenyltetrahydrofolate + NADPH. It carries out the reaction (6R)-5,10-methenyltetrahydrofolate + H2O = (6R)-10-formyltetrahydrofolate + H(+). It participates in one-carbon metabolism; tetrahydrofolate interconversion. Functionally, catalyzes the oxidation of 5,10-methylenetetrahydrofolate to 5,10-methenyltetrahydrofolate and then the hydrolysis of 5,10-methenyltetrahydrofolate to 10-formyltetrahydrofolate. This Francisella tularensis subsp. tularensis (strain FSC 198) protein is Bifunctional protein FolD.